The sequence spans 119 residues: DNA-binding protein MMP0157 (119 aa).

Residues 1 to 12 (MNPEEIRQRRLQ) show a composition bias toward basic and acidic residues. The segment at 1–35 (MNPEEIRQRRLQEMQAKAQAQGAANDPEAQRQMQE) is disordered.

It belongs to the PDCD5 family.

This Methanococcus maripaludis (strain DSM 14266 / JCM 13030 / NBRC 101832 / S2 / LL) protein is DNA-binding protein MMP0157.